A 401-amino-acid chain; its full sequence is Large ribosomal subunit protein uL3 (401 aa).

The interval 1-22 (MSHRKFSAPRHGHMGFTPKKRS) is disordered.

It belongs to the universal ribosomal protein uL3 family.

It localises to the cytoplasm. Functionally, the L3 protein is a component of the large subunit of cytoplasmic ribosomes. In Caenorhabditis elegans, this protein is Large ribosomal subunit protein uL3 (rpl-3).